Reading from the N-terminus, the 338-residue chain is Large ribosomal subunit protein uL10 (338 aa).

Over residues Lys309–Ala327 the composition is skewed to basic and acidic residues. The interval Lys309 to Phe338 is disordered.

This sequence belongs to the universal ribosomal protein uL10 family. As to quaternary structure, part of the 50S ribosomal subunit. Forms part of the ribosomal stalk which helps the ribosome interact with GTP-bound translation factors. Forms a heptameric L10(L12)2(L12)2(L12)2 complex, where L10 forms an elongated spine to which the L12 dimers bind in a sequential fashion.

In terms of biological role, forms part of the ribosomal stalk, playing a central role in the interaction of the ribosome with GTP-bound translation factors. In Methanothermococcus thermolithotrophicus (Methanococcus thermolithotrophicus), this protein is Large ribosomal subunit protein uL10.